Consider the following 143-residue polypeptide: MSLFELLEPTIAGMGYELVDIEQSAPGRLLRVFVDKKDGAITLADCVAVSNHLGQLLAVENIDYNRLEVSSPGLDRPLKKRADFVRFVGESIRIRLRIALQGQRNFVGTLTEVGDDALMLNVDGKLLQFELKNLEKARLIPKL.

Belongs to the RimP family.

It is found in the cytoplasm. In terms of biological role, required for maturation of 30S ribosomal subunits. This is Ribosome maturation factor RimP from Nitrosomonas eutropha (strain DSM 101675 / C91 / Nm57).